The sequence spans 153 residues: MRKVAIPVAILALIGLDQWVKHWVVANISLNQVIKAIPGVFSLTYLQNRGAAFSILQNQKYFFVILTVLVIGAALFYLVKNYQKSLWLVLSLILIISGGIGNFIDRVHLGYVVDMVQLDFIDFAIFNVADSYLTVGVLLLILILWKEENGSHH.

Helical transmembrane passes span 61–81 (YFFVILTVLVIGAALFYLVKN) and 85–105 (SLWLVLSLILIISGGIGNFID). Catalysis depends on residues D114 and D130. A helical transmembrane segment spans residues 125–145 (IFNVADSYLTVGVLLLILILW).

It belongs to the peptidase A8 family.

It is found in the cell membrane. The catalysed reaction is Release of signal peptides from bacterial membrane prolipoproteins. Hydrolyzes -Xaa-Yaa-Zaa-|-(S,diacylglyceryl)Cys-, in which Xaa is hydrophobic (preferably Leu), and Yaa (Ala or Ser) and Zaa (Gly or Ala) have small, neutral side chains.. The protein operates within protein modification; lipoprotein biosynthesis (signal peptide cleavage). In terms of biological role, this protein specifically catalyzes the removal of signal peptides from prolipoproteins. The chain is Lipoprotein signal peptidase from Streptococcus thermophilus (strain CNRZ 1066).